A 192-amino-acid polypeptide reads, in one-letter code: Ion-translocating oxidoreductase complex subunit B (192 aa).

Positions 1-26 (MNAIWIAVAAVSLLGLAFGAILGYAS) are hydrophobic. The 4Fe-4S domain occupies 32–91 (EDDPVVEKIDEILPQSQCGQCGYPGCRPYAEAISCNGEKINRCAPGGEAVMLKIAELLNV). Positions 49, 52, 57, 74, 117, 120, 123, 127, 147, 150, 153, and 157 each coordinate [4Fe-4S] cluster. 4Fe-4S ferredoxin-type domains are found at residues 108–137 (MVAV…GATR) and 138–167 (VMHT…LQPV).

The protein belongs to the 4Fe4S bacterial-type ferredoxin family. RnfB subfamily. As to quaternary structure, the complex is composed of six subunits: RsxA, RsxB, RsxC, RsxD, RsxE and RsxG. The cofactor is [4Fe-4S] cluster.

Its subcellular location is the cell inner membrane. In terms of biological role, part of a membrane-bound complex that couples electron transfer with translocation of ions across the membrane. Required to maintain the reduced state of SoxR. The protein is Ion-translocating oxidoreductase complex subunit B of Shigella boydii serotype 4 (strain Sb227).